The sequence spans 462 residues: GTPase HflX (462 aa).

The region spanning 255–452 (PAVGIVGYTN…LLEEKIYNLP (198 aa)) is the Hflx-type G domain. GTP is bound by residues 261–268 (GYTNAGKS), 286–290 (FATLD), 308–311 (DTVG), 374–377 (NKID), and 430–432 (SAY). Residues Ser-268 and Thr-288 each coordinate Mg(2+).

Belongs to the TRAFAC class OBG-HflX-like GTPase superfamily. HflX GTPase family. In terms of assembly, monomer. Associates with the 50S ribosomal subunit. It depends on Mg(2+) as a cofactor.

Its subcellular location is the cytoplasm. In terms of biological role, GTPase that associates with the 50S ribosomal subunit and may have a role during protein synthesis or ribosome biogenesis. This chain is GTPase HflX, found in Leptospira borgpetersenii serovar Hardjo-bovis (strain JB197).